Consider the following 144-residue polypeptide: Large ribosomal subunit protein uL11 (144 aa).

It belongs to the universal ribosomal protein uL11 family. Part of the ribosomal stalk of the 50S ribosomal subunit. Interacts with L10 and the large rRNA to form the base of the stalk. L10 forms an elongated spine to which L12 dimers bind in a sequential fashion forming a multimeric L10(L12)X complex. One or more lysine residues are methylated.

Forms part of the ribosomal stalk which helps the ribosome interact with GTP-bound translation factors. The protein is Large ribosomal subunit protein uL11 of Rickettsia bellii (strain OSU 85-389).